The chain runs to 197 residues: Elongation factor Ts (197 aa).

The tract at residues 81 to 84 is involved in Mg(2+) ion dislocation from EF-Tu; the sequence is TDFV.

It belongs to the EF-Ts family.

Its subcellular location is the cytoplasm. In terms of biological role, associates with the EF-Tu.GDP complex and induces the exchange of GDP to GTP. It remains bound to the aminoacyl-tRNA.EF-Tu.GTP complex up to the GTP hydrolysis stage on the ribosome. The protein is Elongation factor Ts of Sulfurihydrogenibium sp. (strain YO3AOP1).